The following is a 284-amino-acid chain: Bifunctional protein FolD (284 aa).

Residues 166–168 (GAS) and isoleucine 232 contribute to the NADP(+) site.

This sequence belongs to the tetrahydrofolate dehydrogenase/cyclohydrolase family. In terms of assembly, homodimer.

The enzyme catalyses (6R)-5,10-methylene-5,6,7,8-tetrahydrofolate + NADP(+) = (6R)-5,10-methenyltetrahydrofolate + NADPH. The catalysed reaction is (6R)-5,10-methenyltetrahydrofolate + H2O = (6R)-10-formyltetrahydrofolate + H(+). It functions in the pathway one-carbon metabolism; tetrahydrofolate interconversion. Its function is as follows. Catalyzes the oxidation of 5,10-methylenetetrahydrofolate to 5,10-methenyltetrahydrofolate and then the hydrolysis of 5,10-methenyltetrahydrofolate to 10-formyltetrahydrofolate. This chain is Bifunctional protein FolD, found in Azotobacter vinelandii (strain DJ / ATCC BAA-1303).